The primary structure comprises 306 residues: MKLKTKASIKFGICVGLLCLSITGFTPFFNSTHAEAKSIEDTNMASCITNKKFVQLEKKFDARLGVYAIDIGSNKTIAYRPNERFAYASTYKVLAAAAVLKKNSIEKLNEVIHYSKDDLVTYSPITEKHLDTGMSLKEISEAAIRYSDNTAGNILLQQLGGPKGFEKSLKQIGDHVTKAKRFETDLNSAIPGDIRDTSTAKALATDLKAFTLDNTLTTDKRMILTDWMRGNATGDELIRAGAPIGWEVGDKSGAGSYGTRNDIAIVWPPNRAPIVVAILSNRFTKDANYDNALIAEAAKVVLNDLK.

The N-terminal stretch at 1–36 is a signal peptide; the sequence is MKLKTKASIKFGICVGLLCLSITGFTPFFNSTHAEA. The active-site Acyl-ester intermediate is Ser-89. A substrate-binding site is contributed by 251–253; that stretch reads KSG.

Belongs to the class-A beta-lactamase family.

It is found in the secreted. The catalysed reaction is a beta-lactam + H2O = a substituted beta-amino acid. Functionally, this protein is a beta-lactamase with a substrate specificity for penicillins. The protein is Beta-lactamase (penP) of Bacillus subtilis (strain 168).